A 535-amino-acid chain; its full sequence is Methylmalonate-semialdehyde/malonate-semialdehyde dehydrogenase [acylating], mitochondrial (535 aa).

The transit peptide at 1 to 32 (MAAAVAAAAAVRSRILQVSSKVNSTWYPASSF) directs the protein to the mitochondrion. An N6-acetyllysine; alternate mark is found at Lys47, Lys52, Lys55, and Lys76. Residues Lys47, Lys52, Lys55, and Lys76 each carry the N6-succinyllysine; alternate modification. At Lys87 the chain carries N6-acetyllysine. 2 positions are modified to N6-acetyllysine; alternate: Lys117 and Lys129. An N6-succinyllysine; alternate mark is found at Lys117 and Lys129. NAD(+)-binding residues include Ala183, Phe185, Lys209, Glu212, Arg213, and Ser262. The residue at position 262 (Ser262) is a Phosphoserine. N6-acetyllysine is present on Lys298. Cys317 functions as the Nucleophile in the catalytic mechanism. 2 positions are modified to N6-acetyllysine: Lys330 and Lys331. N6-acetyllysine; alternate occurs at positions 364 and 376. Residues Lys364 and Lys376 each carry the N6-succinyllysine; alternate modification. Ser380 carries the phosphoserine modification. Lys391 is subject to N6-succinyllysine. An NAD(+)-binding site is contributed by Glu417. Position 500 is an N6-acetyllysine (Lys500). Position 517 is an N6-succinyllysine (Lys517).

It belongs to the aldehyde dehydrogenase family. In terms of assembly, homotetramer. Expressed in the head and flagellum of epididymal sperm but not in testicular sperm (at protein level). Kidney &gt; liver &gt; heart &gt; muscle &gt; brain.

It is found in the mitochondrion. It carries out the reaction 3-oxopropanoate + NAD(+) + CoA + H2O = hydrogencarbonate + acetyl-CoA + NADH + H(+). The catalysed reaction is 2-methyl-3-oxopropanoate + NAD(+) + CoA + H2O = propanoyl-CoA + hydrogencarbonate + NADH + H(+). The enzyme catalyses (R)-2-methyl-3-oxopropanoate + NAD(+) + CoA + H2O = propanoyl-CoA + hydrogencarbonate + NADH + H(+). It catalyses the reaction (S)-2-methyl-3-oxopropanoate + NAD(+) + CoA + H2O = propanoyl-CoA + hydrogencarbonate + NADH + H(+). In terms of biological role, malonate and methylmalonate semialdehyde dehydrogenase involved in the catabolism of valine, thymine, and compounds catabolized by way of beta-alanine, including uracil and cytidine. This chain is Methylmalonate-semialdehyde/malonate-semialdehyde dehydrogenase [acylating], mitochondrial, found in Rattus norvegicus (Rat).